Reading from the N-terminus, the 195-residue chain is MREEILELTRNTKETQISMKLKIYGSGVAKISTGIGFFDHMLEAFTKHSLLDLEISCKGDTHVDFHHSVEDVGIVLGQLLNEALYPLSGVERFGEASVVMDEAAVFCALDLSNRAYLVYENFNENAKVGEFDTELVEEFFRAVAINSAITLHLNQIRGKNTHHIIEATFKSFAVALRRALAKNARIGTPSTKGVL.

This sequence belongs to the imidazoleglycerol-phosphate dehydratase family.

The protein resides in the cytoplasm. It catalyses the reaction D-erythro-1-(imidazol-4-yl)glycerol 3-phosphate = 3-(imidazol-4-yl)-2-oxopropyl phosphate + H2O. It participates in amino-acid biosynthesis; L-histidine biosynthesis; L-histidine from 5-phospho-alpha-D-ribose 1-diphosphate: step 6/9. The chain is Imidazoleglycerol-phosphate dehydratase from Campylobacter concisus (strain 13826).